The primary structure comprises 417 residues: Serine hydroxymethyltransferase (417 aa).

(6S)-5,6,7,8-tetrahydrofolate-binding positions include leucine 121 and 125–127 (GHL). Lysine 229 bears the N6-(pyridoxal phosphate)lysine mark. Residue 355-357 (SPF) coordinates (6S)-5,6,7,8-tetrahydrofolate.

This sequence belongs to the SHMT family. In terms of assembly, homodimer. The cofactor is pyridoxal 5'-phosphate.

Its subcellular location is the cytoplasm. The enzyme catalyses (6R)-5,10-methylene-5,6,7,8-tetrahydrofolate + glycine + H2O = (6S)-5,6,7,8-tetrahydrofolate + L-serine. The protein operates within one-carbon metabolism; tetrahydrofolate interconversion. It functions in the pathway amino-acid biosynthesis; glycine biosynthesis; glycine from L-serine: step 1/1. Its function is as follows. Catalyzes the reversible interconversion of serine and glycine with tetrahydrofolate (THF) serving as the one-carbon carrier. This reaction serves as the major source of one-carbon groups required for the biosynthesis of purines, thymidylate, methionine, and other important biomolecules. Also exhibits THF-independent aldolase activity toward beta-hydroxyamino acids, producing glycine and aldehydes, via a retro-aldol mechanism. The protein is Serine hydroxymethyltransferase of Sodalis glossinidius (strain morsitans).